The following is a 339-amino-acid chain: Biotin synthase (339 aa).

In terms of domain architecture, Radical SAM core spans Asn55–Arg282. [4Fe-4S] cluster-binding residues include Cys70, Cys74, and Cys77. Residues Cys114, Cys145, Cys205, and Arg277 each coordinate [2Fe-2S] cluster.

This sequence belongs to the radical SAM superfamily. Biotin synthase family. As to quaternary structure, homodimer. [4Fe-4S] cluster serves as cofactor. It depends on [2Fe-2S] cluster as a cofactor.

It catalyses the reaction (4R,5S)-dethiobiotin + (sulfur carrier)-SH + 2 reduced [2Fe-2S]-[ferredoxin] + 2 S-adenosyl-L-methionine = (sulfur carrier)-H + biotin + 2 5'-deoxyadenosine + 2 L-methionine + 2 oxidized [2Fe-2S]-[ferredoxin]. It functions in the pathway cofactor biosynthesis; biotin biosynthesis; biotin from 7,8-diaminononanoate: step 2/2. Its function is as follows. Catalyzes the conversion of dethiobiotin (DTB) to biotin by the insertion of a sulfur atom into dethiobiotin via a radical-based mechanism. The chain is Biotin synthase from Burkholderia ambifaria (strain ATCC BAA-244 / DSM 16087 / CCUG 44356 / LMG 19182 / AMMD) (Burkholderia cepacia (strain AMMD)).